The chain runs to 101 residues: DNA-binding protein Fis (101 aa).

The segment at residues 77-96 (QTRAANMLGINRGTLRKKLK) is a DNA-binding region (H-T-H motif).

Belongs to the transcriptional regulatory Fis family. As to quaternary structure, homodimer.

In terms of biological role, activates ribosomal RNA transcription. Plays a direct role in upstream activation of rRNA promoters. The sequence is that of DNA-binding protein Fis from Shewanella sediminis (strain HAW-EB3).